The sequence spans 675 residues: Polyphosphate kinase (675 aa).

N42 contacts ATP. R372 and R401 together coordinate Mg(2+). H431 (phosphohistidine intermediate) is an active-site residue. The ATP site is built by Y464, R558, and H586.

This sequence belongs to the polyphosphate kinase 1 (PPK1) family. Mg(2+) is required as a cofactor. An intermediate of this reaction is the autophosphorylated ppk in which a phosphate is covalently linked to a histidine residue through a N-P bond.

The enzyme catalyses [phosphate](n) + ATP = [phosphate](n+1) + ADP. Its function is as follows. Catalyzes the reversible transfer of the terminal phosphate of ATP to form a long-chain polyphosphate (polyP). The chain is Polyphosphate kinase from Helicobacter pylori (strain J99 / ATCC 700824) (Campylobacter pylori J99).